A 90-amino-acid chain; its full sequence is Acyl-CoA-binding protein homolog (90 aa).

An ACB domain is found at 3–89 (LQEQFDQAAS…VESLIASLGL (87 aa)). An acyl-CoA-binding positions include R15, 30–34 (YALFK), K53, K57, and Y76.

This sequence belongs to the ACBP family.

Binds medium- and long-chain acyl-CoA esters with very high affinity and may function as an intracellular carrier of acyl-CoA esters. The polypeptide is Acyl-CoA-binding protein homolog (Manduca sexta (Tobacco hawkmoth)).